The chain runs to 151 residues: Deoxyuridine 5'-triphosphate nucleotidohydrolase (151 aa).

Residues 70 to 72 (RSG), N83, 87 to 89 (LID), and M97 each bind substrate.

Belongs to the dUTPase family. It depends on Mg(2+) as a cofactor.

It carries out the reaction dUTP + H2O = dUMP + diphosphate + H(+). The protein operates within pyrimidine metabolism; dUMP biosynthesis; dUMP from dCTP (dUTP route): step 2/2. Its function is as follows. This enzyme is involved in nucleotide metabolism: it produces dUMP, the immediate precursor of thymidine nucleotides and it decreases the intracellular concentration of dUTP so that uracil cannot be incorporated into DNA. The chain is Deoxyuridine 5'-triphosphate nucleotidohydrolase from Pseudomonas fluorescens (strain Pf0-1).